A 461-amino-acid chain; its full sequence is UDP-glycosyltransferase 82A1 (461 aa).

Residues Ser292, 349-351, 366-374, and 388-391 each bind UDP-alpha-D-glucose; these read APQ, HCGWNSTME, and AGDQ.

The protein belongs to the UDP-glycosyltransferase family.

This chain is UDP-glycosyltransferase 82A1 (UGT82A1), found in Arabidopsis thaliana (Mouse-ear cress).